A 406-amino-acid chain; its full sequence is Cysteine desulfurase (406 aa).

Residue K226 is modified to N6-(pyridoxal phosphate)lysine. Residue C364 is the Cysteine persulfide intermediate of the active site.

The protein belongs to the class-V pyridoxal-phosphate-dependent aminotransferase family. Csd subfamily. In terms of assembly, homodimer. Interacts with SufE and the SufBCD complex composed of SufB, SufC and SufD. The interaction with SufE is required to mediate the direct transfer of the sulfur atom from the S-sulfanylcysteine. Pyridoxal 5'-phosphate serves as cofactor.

It localises to the cytoplasm. The enzyme catalyses (sulfur carrier)-H + L-cysteine = (sulfur carrier)-SH + L-alanine. The catalysed reaction is L-selenocysteine + AH2 = hydrogenselenide + L-alanine + A + H(+). It participates in cofactor biosynthesis; iron-sulfur cluster biosynthesis. Functionally, cysteine desulfurases mobilize the sulfur from L-cysteine to yield L-alanine, an essential step in sulfur metabolism for biosynthesis of a variety of sulfur-containing biomolecules. Component of the suf operon, which is activated and required under specific conditions such as oxidative stress and iron limitation. Acts as a potent selenocysteine lyase in vitro, that mobilizes selenium from L-selenocysteine. Selenocysteine lyase activity is however unsure in vivo. This Escherichia coli O157:H7 (strain EC4115 / EHEC) protein is Cysteine desulfurase.